The primary structure comprises 132 residues: Arsenate reductase 1 (132 aa).

Residues Cys-10, Cys-82, and Cys-89 each act as nucleophile in the active site. 2 disulfides stabilise this stretch: Cys-10–Cys-82 and Cys-82–Cys-89.

The protein belongs to the low molecular weight phosphotyrosine protein phosphatase family. Thioredoxin-coupled ArsC subfamily.

It is found in the cytoplasm. It catalyses the reaction arsenate + [thioredoxin]-dithiol + H(+) = arsenite + [thioredoxin]-disulfide + H2O. Catalyzes the reduction of arsenate [As(V)] to arsenite [As(III)]. In Staphylococcus epidermidis (strain ATCC 35984 / DSM 28319 / BCRC 17069 / CCUG 31568 / BM 3577 / RP62A), this protein is Arsenate reductase 1.